We begin with the raw amino-acid sequence, 506 residues long: NAD(P)H-quinone oxidoreductase subunit 2 (506 aa).

Helical transmembrane passes span 14 to 34, 42 to 62, 79 to 99, 108 to 128, 132 to 152, 167 to 187, 206 to 226, 240 to 260, 276 to 296, 302 to 322, 330 to 350, 374 to 394, and 409 to 429; these read AIIPEAFILLGIVGTLLVDLA, WAPSICYLSIGSSLLSLTLQW, LAIAFRAIIALSTLVSLLISW, PIGEFAAIVLSATLGAMLLCG, LISVFISLETLSVASYLLSGY, LLVGSAAAAVYLYGSSFLYGL, FITSLALVFVLSTVAFKIAAV, PTPVVAFLSVGSKTAGFAFAI, LLFTILAILSMALGNVVALAQ, MLAYSSIGQAGFVMIGIVSGT, VLYLAAYLFMNLGAFSCVILF, LGLSLCLLSLGGLPPMLGFFG, and LLVIVGLVTSVISIYYYISVI.

It belongs to the complex I subunit 2 family. In terms of assembly, NDH-1 can be composed of about 15 different subunits; different subcomplexes with different compositions have been identified which probably have different functions.

It localises to the cellular thylakoid membrane. The catalysed reaction is a plastoquinone + NADH + (n+1) H(+)(in) = a plastoquinol + NAD(+) + n H(+)(out). The enzyme catalyses a plastoquinone + NADPH + (n+1) H(+)(in) = a plastoquinol + NADP(+) + n H(+)(out). Functionally, NDH-1 shuttles electrons from an unknown electron donor, via FMN and iron-sulfur (Fe-S) centers, to quinones in the respiratory and/or the photosynthetic chain. The immediate electron acceptor for the enzyme in this species is believed to be plastoquinone. Couples the redox reaction to proton translocation, and thus conserves the redox energy in a proton gradient. Cyanobacterial NDH-1 also plays a role in inorganic carbon-concentration. This Prochlorococcus marinus (strain MIT 9301) protein is NAD(P)H-quinone oxidoreductase subunit 2.